A 173-amino-acid chain; its full sequence is Galactose-6-phosphate isomerase subunit LacB (173 aa).

It belongs to the LacAB/RpiB family. As to quaternary structure, heteromultimeric protein consisting of LacA and LacB.

The catalysed reaction is aldehydo-D-galactose 6-phosphate = keto-D-tagatose 6-phosphate. It functions in the pathway carbohydrate metabolism; D-galactose 6-phosphate degradation; D-tagatose 6-phosphate from D-galactose 6-phosphate: step 1/1. The sequence is that of Galactose-6-phosphate isomerase subunit LacB from Clostridium acetobutylicum (strain ATCC 824 / DSM 792 / JCM 1419 / IAM 19013 / LMG 5710 / NBRC 13948 / NRRL B-527 / VKM B-1787 / 2291 / W).